A 273-amino-acid chain; its full sequence is MHDANIRVAIAGAGGRMGRQLIQAALALEGVQLGAALEREGSSLLGSDAGELAGAGKTGVTVQSSLDAVKDDFDVFIDFTRPEGTLNHLAFCRQHGKGMVIGTTGFDEAGKQAIRDAAADIAIVFAANFSVGVNVMLKLLEKAAKVMGDYTDIEIIEAHHRHKVDAPSGTALAMGEAIAHALDKDLKDCAVYSREGHTGERVPGTIGFATVRAGDIVGEHTAMFADIGERLEITHKASSRMTFANGAVRSALWLSGKENGLFDMRDVLNLNNL.

NAD(+)-binding positions include 12 to 17 (GAGGRM) and E38. Residue R39 coordinates NADP(+). Residues 102–104 (GTT) and 126–129 (AANF) contribute to the NAD(+) site. Residue H159 is the Proton donor/acceptor of the active site. A (S)-2,3,4,5-tetrahydrodipicolinate-binding site is contributed by H160. Residue K163 is the Proton donor of the active site. Residue 169–170 (GT) participates in (S)-2,3,4,5-tetrahydrodipicolinate binding.

The protein belongs to the DapB family. Homotetramer.

It is found in the cytoplasm. The enzyme catalyses (S)-2,3,4,5-tetrahydrodipicolinate + NAD(+) + H2O = (2S,4S)-4-hydroxy-2,3,4,5-tetrahydrodipicolinate + NADH + H(+). It catalyses the reaction (S)-2,3,4,5-tetrahydrodipicolinate + NADP(+) + H2O = (2S,4S)-4-hydroxy-2,3,4,5-tetrahydrodipicolinate + NADPH + H(+). It participates in amino-acid biosynthesis; L-lysine biosynthesis via DAP pathway; (S)-tetrahydrodipicolinate from L-aspartate: step 4/4. Catalyzes the conversion of 4-hydroxy-tetrahydrodipicolinate (HTPA) to tetrahydrodipicolinate. The sequence is that of 4-hydroxy-tetrahydrodipicolinate reductase from Shigella sonnei (strain Ss046).